Consider the following 396-residue polypeptide: 1-deoxy-D-xylulose 5-phosphate reductoisomerase (396 aa).

NADPH contacts are provided by Thr10, Gly11, Ser12, Ile13, Asn38, and Asn123. Lys124 lines the 1-deoxy-D-xylulose 5-phosphate pocket. Residue Glu125 participates in NADPH binding. Asp149 lines the Mn(2+) pocket. 4 residues coordinate 1-deoxy-D-xylulose 5-phosphate: Ser150, Glu151, Ser185, and His208. Glu151 contacts Mn(2+). Residue Gly214 participates in NADPH binding. 1-deoxy-D-xylulose 5-phosphate-binding residues include Ser221, Asn226, Lys227, and Glu230. Position 230 (Glu230) interacts with Mn(2+).

This sequence belongs to the DXR family. Requires Mg(2+) as cofactor. Mn(2+) is required as a cofactor.

It carries out the reaction 2-C-methyl-D-erythritol 4-phosphate + NADP(+) = 1-deoxy-D-xylulose 5-phosphate + NADPH + H(+). It functions in the pathway isoprenoid biosynthesis; isopentenyl diphosphate biosynthesis via DXP pathway; isopentenyl diphosphate from 1-deoxy-D-xylulose 5-phosphate: step 1/6. Its function is as follows. Catalyzes the NADPH-dependent rearrangement and reduction of 1-deoxy-D-xylulose-5-phosphate (DXP) to 2-C-methyl-D-erythritol 4-phosphate (MEP). The protein is 1-deoxy-D-xylulose 5-phosphate reductoisomerase of Shewanella halifaxensis (strain HAW-EB4).